Reading from the N-terminus, the 206-residue chain is Large ribosomal subunit protein uL4 (206 aa).

Residues 45 to 78 (QGNRAQKDREQVKHTTKKPWRQKGTGRARAGMSS) form a disordered region. Residues 58–70 (HTTKKPWRQKGTG) show a composition bias toward basic residues.

Belongs to the universal ribosomal protein uL4 family. Part of the 50S ribosomal subunit.

Functionally, one of the primary rRNA binding proteins, this protein initially binds near the 5'-end of the 23S rRNA. It is important during the early stages of 50S assembly. It makes multiple contacts with different domains of the 23S rRNA in the assembled 50S subunit and ribosome. Forms part of the polypeptide exit tunnel. This chain is Large ribosomal subunit protein uL4, found in Burkholderia ambifaria (strain MC40-6).